A 476-amino-acid polypeptide reads, in one-letter code: Rifampicin monooxygenase (476 aa).

FAD contacts are provided by T12, E31, K32, Q98, L122, and T156. Rifampicin contacts are provided by R196 and R213. Residues D277, L290, and N291 each contribute to the FAD site.

Belongs to the rifampicin monooxygenase family. Requires FAD as cofactor.

It catalyses the reaction rifampicin + NADPH + O2 = rifampicin para-naphthoquinone carboxamide + NADP(+) + H2O + H(+). It carries out the reaction rifampicin + NADH + O2 = rifampicin para-naphthoquinone carboxamide + NAD(+) + H2O + H(+). The catalysed reaction is rifamycin SV + NADPH + O2 = rifamycin SV para-naphthoquinone carboxamide + NADP(+) + H2O. The enzyme catalyses rifamycin SV + NADH + O2 = rifamycin SV para-naphthoquinone carboxamide + NAD(+) + H2O. Functionally, monooxygenase that can modify rifampicin, thereby inactivating its antibiotic activity. Inactivates a broad range of rifamycin antibiotics. This is Rifampicin monooxygenase from Streptomyces venezuelae (strain ATCC 10712 / CBS 650.69 / DSM 40230 / JCM 4526 / NBRC 13096 / PD 04745).